Reading from the N-terminus, the 164-residue chain is NADH-quinone oxidoreductase subunit B (164 aa).

Cys-38, Cys-39, Cys-104, and Cys-133 together coordinate [4Fe-4S] cluster.

Belongs to the complex I 20 kDa subunit family. In terms of assembly, NDH-1 is composed of 14 different subunits. Subunits NuoB, C, D, E, F, and G constitute the peripheral sector of the complex. [4Fe-4S] cluster serves as cofactor.

It localises to the cell inner membrane. The catalysed reaction is a quinone + NADH + 5 H(+)(in) = a quinol + NAD(+) + 4 H(+)(out). Its function is as follows. NDH-1 shuttles electrons from NADH, via FMN and iron-sulfur (Fe-S) centers, to quinones in the respiratory chain. The immediate electron acceptor for the enzyme in this species is believed to be ubiquinone. Couples the redox reaction to proton translocation (for every two electrons transferred, four hydrogen ions are translocated across the cytoplasmic membrane), and thus conserves the redox energy in a proton gradient. The sequence is that of NADH-quinone oxidoreductase subunit B from Protochlamydia amoebophila (strain UWE25).